Consider the following 358-residue polypeptide: DnaJ homolog subfamily C member 18 (358 aa).

In terms of domain architecture, J spans 82-146 (NYYEILGVSR…DKRLRYDEYG (65 aa)). A helical transmembrane segment spans residues 228–248 (AFIQLLPVLVIVIISVITQLL).

The protein localises to the endoplasmic reticulum membrane. In Bos taurus (Bovine), this protein is DnaJ homolog subfamily C member 18 (DNAJC18).